The sequence spans 212 residues: MNTSRFESLTGSVDVLFPEYDDPPSEPITLLKRWLATADVARVREPKALALATATSDGRISSRVIAFSSIDDRGVIFCTHSTSRKGRELTETGWASGLLYWRETGQQIMISGQAVPLEESENDKLWFGRSVPMHAMSSASHQSDELVDREALRAHAAELLALGVALPRPPRFVGYRLEPHEMEFWAASSDRLHRRLRYERDGNDWKTTQLQP.

Residue Ser-8 participates in substrate binding. FMN is bound by residues 63-66 and 78-79; these read RVIA and CT. His-80 contacts substrate. FMN-binding positions include 84 to 85 and Gln-107; that span reads RK. The substrate site is built by Arg-129 and Ser-137. FMN is bound by residues 142 to 143 and Arg-195; that span reads QS.

Belongs to the pyridoxamine 5'-phosphate oxidase family. FMN is required as a cofactor.

It catalyses the reaction (1R,6R)-1,4,5,5a,6,9-hexahydrophenazine-1,6-dicarboxylate + O2 = (1R,10aS)-1,4,10,10a-tetrahydrophenazine-1,6-dicarboxylate + H2O2. It carries out the reaction (1R,10aS)-1,4,10,10a-tetrahydrophenazine-1,6-dicarboxylate + O2 = (5aS)-5,5a-dihydrophenazine-1,6-dicarboxylate + H2O2. The catalysed reaction is (1R,10aS)-1,4,10,10a-tetrahydrophenazine-1-carboxylate + O2 = (10aS)-10,10a-dihydrophenazine-1-carboxylate + H2O2. The enzyme catalyses (1R)-1,4,5,10-tetrahydrophenazine-1-carboxylate + O2 = (10aS)-10,10a-dihydrophenazine-1-carboxylate + H2O2. The protein operates within antibiotic biosynthesis; phenazine biosynthesis. Functionally, involved in the biosynthesis of the antibiotic phenazine, a nitrogen-containing heterocyclic molecule having important roles in virulence, competition and biological control. Catalyzes several oxidations in the terminal steps of core phenazine biosynthesis. It oxidizes both hexahydrophenazine-1,6-dicarboxylic acid (HHPDC) and tetrahydrophenazine-1-carboxylic acid (THPCA) and thereby contributes to the generation of both phenazine-1,6-dicarboxylic acid (PDC) and phenazine-1-carboxylic acid (PCA). It synthesizes phenazines in their reduced form, which are the likely end products in vivo. The sequence is that of Dihydrophenazinedicarboxylate synthase from Burkholderia lata (strain ATCC 17760 / DSM 23089 / LMG 22485 / NCIMB 9086 / R18194 / 383).